The primary structure comprises 89 residues: Co-chaperonin GroES (89 aa).

It belongs to the GroES chaperonin family. As to quaternary structure, heptamer of 7 subunits arranged in a ring. Interacts with the chaperonin GroEL.

The protein localises to the cytoplasm. Its function is as follows. Together with the chaperonin GroEL, plays an essential role in assisting protein folding. The GroEL-GroES system forms a nano-cage that allows encapsulation of the non-native substrate proteins and provides a physical environment optimized to promote and accelerate protein folding. GroES binds to the apical surface of the GroEL ring, thereby capping the opening of the GroEL channel. This Parabacteroides distasonis (strain ATCC 8503 / DSM 20701 / CIP 104284 / JCM 5825 / NCTC 11152) protein is Co-chaperonin GroES.